We begin with the raw amino-acid sequence, 1382 residues long: Insulin receptor (1382 aa).

Residues 1–27 (MATGGRRGAAAAPLLVAVAALLLGAAG) form the signal peptide. Extracellular-facing segments span residues 28–758 (HLYP…PRPS) and 763–956 (SLGD…NIAK). Cysteine 35 and cysteine 53 are joined by a disulfide. N-linked (GlcNAc...) asparagine glycans are attached at residues asparagine 43, asparagine 52, asparagine 105, and asparagine 138. Cystine bridges form between cysteine 153–cysteine 182, cysteine 186–cysteine 209, cysteine 196–cysteine 215, cysteine 219–cysteine 228, cysteine 223–cysteine 234, cysteine 235–cysteine 243, cysteine 239–cysteine 252, cysteine 255–cysteine 264, and cysteine 268–cysteine 280. Asparagine 242 carries N-linked (GlcNAc...) asparagine glycosylation. N-linked (GlcNAc...) asparagine glycosylation occurs at asparagine 282. Cystine bridges form between cysteine 286–cysteine 311, cysteine 293–cysteine 301, cysteine 315–cysteine 328, cysteine 331–cysteine 335, and cysteine 339–cysteine 360. Asparagine 322 carries N-linked (GlcNAc...) asparagine glycosylation. Residue asparagine 364 is glycosylated (N-linked (GlcNAc...) asparagine). Residue serine 400 is modified to Phosphoserine. Tyrosine 401 is modified (phosphotyrosine). Serine 407 carries the phosphoserine modification. 2 N-linked (GlcNAc...) asparagine glycosylation sites follow: asparagine 424 and asparagine 445. Cysteine 462 and cysteine 495 are disulfide-bonded. Residues asparagine 541, asparagine 633, asparagine 651, and asparagine 698 are each glycosylated (N-linked (GlcNAc...) asparagine). Residues 624 to 726 (VPLDPISVSN…SQILKELEES (103 aa)) form the Fibronectin type-III 1 domain. Disulfide bonds link cysteine 674/cysteine 899 and cysteine 825/cysteine 834. Residues 686–708 (SPPFESEDSQKHNQSEYEDSAGE) are disordered. The interval 733-741 (EDYLHNVVF) is insulin-binding. Residues 746-766 (TSSGTGAEDPRPSRKRRSLGD) are disordered. 2 consecutive Fibronectin type-III domains span residues 757–842 (PSRK…YVSA) and 853–947 (IVGP…VTDY). 2 N-linked (GlcNAc...) asparagine glycosylation sites follow: asparagine 769 and asparagine 782. N-linked (GlcNAc...) asparagine glycans are attached at residues asparagine 920 and asparagine 933. The helical transmembrane segment at 957–979 (IIIGPLIFVFLFSVVIGSIYLFL) threads the bilayer. The Cytoplasmic segment spans residues 980 to 1382 (RKRQPDGPLG…ILTLPRSNPS (403 aa)). Phosphotyrosine; by autocatalysis occurs at positions 992, 999, and 1011. Position 999 (tyrosine 999) is a region of interest, important for interaction with IRS1, SHC1 and STAT5B. The 276-residue stretch at 1023–1298 (ITLLRELGQG…LLKDDLHPSF (276 aa)) folds into the Protein kinase domain. Residues serine 1033 and lysine 1057 each contribute to the ATP site. A Glycyl lysine isopeptide (Lys-Gly) (interchain with G-Cter in ubiquitin) cross-link involves residue lysine 1079. An S-nitrosocysteine modification is found at cysteine 1083. ATP is bound at residue 1104–1110 (ELMAHGD). Aspartate 1159 acts as the Proton donor/acceptor in catalysis. Residues 1163–1164 (RN) and aspartate 1177 each bind ATP. Phosphotyrosine; by autocatalysis occurs at positions 1185, 1189, 1190, 1355, and 1361. Residues 1360–1382 (PYTHMNGGKKNGRILTLPRSNPS) form a disordered region. The segment at 1361-1364 (YTHM) is PIK3R1-binding.

This sequence belongs to the protein kinase superfamily. Tyr protein kinase family. Insulin receptor subfamily. As to quaternary structure, tetramer of 2 alpha and 2 beta chains linked by disulfide bonds. The alpha chains carry the insulin-binding regions, while the beta chains carry the kinase domain. Forms a hybrid receptor with IGF1R, the hybrid is a tetramer consisting of 1 alpha chain and 1 beta chain of INSR and 1 alpha chain and 1 beta chain of IGF1R. Interacts with SORBS1 but dissociates from it following insulin stimulation. Binds SH2B2. Activated form of INSR interacts (via Tyr-999) with the PTB/PID domains of IRS1 and SHC1. The sequences surrounding the phosphorylated NPXY motif contribute differentially to either IRS1 or SHC1 recognition. Interacts (via tyrosines in the C-terminus) with IRS2 (via PTB domain and 591-786 AA); the 591-786 would be the primary anchor of IRS2 to INSR while the PTB domain would have a stabilizing action on the interaction with INSR. Interacts with the SH2 domains of the 85 kDa regulatory subunit of PI3K (PIK3R1) in vitro, when autophosphorylated on tyrosine residues. Interacts with SOCS7. Interacts (via the phosphorylated Tyr-999), with SOCS3. Interacts (via the phosphorylated Tyr-1185, Tyr-1189, Tyr-1190) with SOCS1. Interacts with CAV2 (tyrosine-phosphorylated form); the interaction is increased with 'Tyr-27'phosphorylation of CAV2. Interacts with ARRB2. Interacts with GRB10; this interaction blocks the association between IRS1/IRS2 and INSR, significantly reduces insulin-stimulated tyrosine phosphorylation of IRS1 and IRS2 and thus decreases insulin signaling. Interacts with GRB7. Interacts with PDPK1. Interacts (via Tyr-1190) with GRB14 (via BPS domain); this interaction protects the tyrosines in the activation loop from dephosphorylation, but promotes dephosphorylation of Tyr-999, this results in decreased interaction with, and phosphorylation of, IRS1. Interacts (via subunit alpha) with ENPP1 (via 485-599 AA); this interaction blocks autophosphorylation. Interacts with PTPRE; this interaction is dependent of Tyr-1185, Tyr-1189 and Tyr-1190 of the INSR. Interacts with STAT5B (via SH2 domain). Interacts with PTPRF. Interacts with ATIC; ATIC together with PRKAA2/AMPK2 and HACD3/PTPLAD1 is proposed to be part of a signaling netwok regulating INSR autophosphorylation and endocytosis. Interacts with the cone snail venom insulin Con-Ins G1. Interacts with the insulin receptor SORL1; this interaction strongly increases its surface exposure, hence strengthens insulin signal reception. Interacts (tyrosine phosphorylated) with CCDC88A/GIV (via SH2-like region); binding requires autophosphorylation of the INSR C-terminal region. Interacts with GNAI3; the interaction is probably mediated by CCDC88A/GIV. Interacts with LMBRD1. Interacts (in response to insulin stimulation) with NCK1; this interaction may recruit PTPN1 to mediate INSR dephosphorylation. Interacts with CD248; this interaction diminishes INSR autophosphorylation. After being transported from the endoplasmic reticulum to the Golgi apparatus, the single glycosylated precursor is further glycosylated and then cleaved, followed by its transport to the plasma membrane. Post-translationally, autophosphorylated on tyrosine residues in response to insulin. Phosphorylation of Tyr-999 is required for binding to IRS1, SHC1 and STAT5B. Dephosphorylated by PTPRE at Tyr-999, Tyr-1185, Tyr-1189 and Tyr-1190. May also be phosphorylated at Tyr-1185 and Tyr-1190 by mTORC2. Dephosphorylated by PTPRF and PTPN1. Dephosphorylated by PTPN2; down-regulates insulin-induced signaling. Dephosphorylation at Tyr-1189 and Tyr-1190 requires the SH2/SH3 adapter protein NCK1, probably to recruit its interaction partner PTPN1. In terms of processing, S-nitrosylation at Cys-1083 by BLVRB inhibits the receptor tyrosine kinase, thereby inhibiting insulin signaling. Ubiquitinated by MARCHF1; leading to degradation thereby reducing surface INSR expression. In terms of tissue distribution, isoform Long and isoform Short are predominantly expressed in tissue targets of insulin metabolic effects: liver, adipose tissue and skeletal muscle but are also expressed in the peripheral nerve, kidney, pulmonary alveoli, pancreatic acini, placenta vascular endothelium, fibroblasts, monocytes, granulocytes, erythrocytes and skin. Isoform Short is preferentially expressed in fetal cells such as fetal fibroblasts, muscle, liver and kidney. Found as a hybrid receptor with IGF1R in muscle, heart, kidney, adipose tissue, skeletal muscle, hepatoma, fibroblasts, spleen and placenta (at protein level). Overexpressed in several tumors, including breast, colon, lung, ovary, and thyroid carcinomas.

The protein localises to the cell membrane. It localises to the late endosome. It is found in the lysosome. It carries out the reaction L-tyrosyl-[protein] + ATP = O-phospho-L-tyrosyl-[protein] + ADP + H(+). With respect to regulation, activated in response to insulin. Autophosphorylation activates the kinase activity. PTPN1, PTPRE and PTPRF dephosphorylate important tyrosine residues, thereby reducing INSR activity. Inhibited by ENPP1. GRB10 and GRB14 inhibit the catalytic activity of the INSR, they block access of substrates to the activated receptor. SOCS1 and SOCS3 act as negative regulators of INSR activity, they bind to the activated INRS and interfere with the phosphorylation of INSR substrates. In terms of biological role, receptor tyrosine kinase which mediates the pleiotropic actions of insulin. Binding of insulin leads to phosphorylation of several intracellular substrates, including, insulin receptor substrates (IRS1, 2, 3, 4), SHC, GAB1, CBL and other signaling intermediates. Each of these phosphorylated proteins serve as docking proteins for other signaling proteins that contain Src-homology-2 domains (SH2 domain) that specifically recognize different phosphotyrosine residues, including the p85 regulatory subunit of PI3K and SHP2. Phosphorylation of IRSs proteins lead to the activation of two main signaling pathways: the PI3K-AKT/PKB pathway, which is responsible for most of the metabolic actions of insulin, and the Ras-MAPK pathway, which regulates expression of some genes and cooperates with the PI3K pathway to control cell growth and differentiation. Binding of the SH2 domains of PI3K to phosphotyrosines on IRS1 leads to the activation of PI3K and the generation of phosphatidylinositol-(3, 4, 5)-triphosphate (PIP3), a lipid second messenger, which activates several PIP3-dependent serine/threonine kinases, such as PDPK1 and subsequently AKT/PKB. The net effect of this pathway is to produce a translocation of the glucose transporter SLC2A4/GLUT4 from cytoplasmic vesicles to the cell membrane to facilitate glucose transport. Moreover, upon insulin stimulation, activated AKT/PKB is responsible for: anti-apoptotic effect of insulin by inducing phosphorylation of BAD; regulates the expression of gluconeogenic and lipogenic enzymes by controlling the activity of the winged helix or forkhead (FOX) class of transcription factors. Another pathway regulated by PI3K-AKT/PKB activation is mTORC1 signaling pathway which regulates cell growth and metabolism and integrates signals from insulin. AKT mediates insulin-stimulated protein synthesis by phosphorylating TSC2 thereby activating mTORC1 pathway. The Ras/RAF/MAP2K/MAPK pathway is mainly involved in mediating cell growth, survival and cellular differentiation of insulin. Phosphorylated IRS1 recruits GRB2/SOS complex, which triggers the activation of the Ras/RAF/MAP2K/MAPK pathway. In addition to binding insulin, the insulin receptor can bind insulin-like growth factors (IGFI and IGFII). Isoform Short has a higher affinity for IGFII binding. When present in a hybrid receptor with IGF1R, binds IGF1. PubMed:12138094 shows that hybrid receptors composed of IGF1R and INSR isoform Long are activated with a high affinity by IGF1, with low affinity by IGF2 and not significantly activated by insulin, and that hybrid receptors composed of IGF1R and INSR isoform Short are activated by IGF1, IGF2 and insulin. In contrast, PubMed:16831875 shows that hybrid receptors composed of IGF1R and INSR isoform Long and hybrid receptors composed of IGF1R and INSR isoform Short have similar binding characteristics, both bind IGF1 and have a low affinity for insulin. In adipocytes, inhibits lipolysis. The chain is Insulin receptor (INSR) from Homo sapiens (Human).